The following is a 137-amino-acid chain: Proofreading thioesterase EntH (137 aa).

Glu63 functions as the Nucleophile or proton acceptor in the catalytic mechanism.

The protein belongs to the thioesterase PaaI family. In terms of assembly, homotetramer. Dimer of dimers. Interacts specifically with the aryl carrier protein (ArCP) domain of EntB.

The protein resides in the cytoplasm. It participates in siderophore biosynthesis; enterobactin biosynthesis. In terms of biological role, required for optimal enterobactin synthesis. Acts as a proofreading enzyme that prevents EntB misacylation by hydrolyzing the thioester bound existing between EntB and wrongly charged molecules. The protein is Proofreading thioesterase EntH of Cronobacter turicensis (strain DSM 18703 / CCUG 55852 / LMG 23827 / z3032).